We begin with the raw amino-acid sequence, 188 residues long: Viral FLICE protein (188 aa).

2 consecutive DED domains span residues 2–74 and 93–169; these read ATYE…DLLH and PYQL…QVQT.

Interacts with host RIPK1, TRAF2, MAP3K14, IKBKB, and IKBKG. Interacts with host CADM1; this interaction is essential for chronic NF-kappa-B activation.

In terms of biological role, plays a role in the modulation of host signaling pathways by acting as an activator of both the classic and the alternative NF-kappa-B pathways. Thereby, initiates an important range of cellular processes to promote cell survival, proliferation and protection from apoptosis. The protein is Viral FLICE protein (ORF71) of Human herpesvirus 8 type P (isolate GK18) (HHV-8).